Reading from the N-terminus, the 138-residue chain is Class I hydrophobin 3 (138 aa).

Residues 1–16 form the signal peptide; that stretch reads MRFFLAITALVAAVTA. 4 disulfide bridges follow: Cys-40–Cys-111, Cys-48–Cys-105, Cys-49–Cys-87, and Cys-112–Cys-130.

This sequence belongs to the fungal hydrophobin family. In terms of assembly, self-assembles to form functional amyloid fibrils called rodlets. Self-assembly into fibrillar rodlets occurs spontaneously at hydrophobic:hydrophilic interfaces and the rodlets further associate laterally to form amphipathic monolayers.

It is found in the secreted. The protein localises to the cell wall. In terms of biological role, aerial growth, conidiation, and dispersal of filamentous fungi in the environment rely upon a capability of their secreting small amphipathic proteins called hydrophobins (HPBs) with low sequence identity. Class I can self-assemble into an outermost layer of rodlet bundles on aerial cell surfaces, conferring cellular hydrophobicity that supports fungal growth, development and dispersal; whereas Class II form highly ordered films at water-air interfaces through intermolecular interactions but contribute nothing to the rodlet structure. HYD3 is a class I hydrophobin that contributes to the formation of aerial hyphae and fruiting bodies. The protein is Class I hydrophobin 3 of Cordyceps militaris (Caterpillar fungus).